The sequence spans 239 residues: 7-cyano-7-deazaguanine synthase (239 aa).

ATP is bound at residue 8 to 18 (LSGGLDSPTVL). Zn(2+) is bound by residues C188, C196, C199, and C202.

This sequence belongs to the QueC family. It depends on Zn(2+) as a cofactor.

It catalyses the reaction 7-carboxy-7-deazaguanine + NH4(+) + ATP = 7-cyano-7-deazaguanine + ADP + phosphate + H2O + H(+). It functions in the pathway purine metabolism; 7-cyano-7-deazaguanine biosynthesis. Functionally, catalyzes the ATP-dependent conversion of 7-carboxy-7-deazaguanine (CDG) to 7-cyano-7-deazaguanine (preQ(0)). The chain is 7-cyano-7-deazaguanine synthase from Picrophilus torridus (strain ATCC 700027 / DSM 9790 / JCM 10055 / NBRC 100828 / KAW 2/3).